Reading from the N-terminus, the 566-residue chain is Putative pentatricopeptide repeat-containing protein At1g28020 (566 aa).

PPR repeat units follow at residues 136-171 (GDSV…GLLL), 172-206 (RPVP…DVEA), 207-242 (DNVT…GIKL), 243-273 (EWHT…TEQL), 279-309 (LKSA…YKSK), 314-348 (DNNG…PLEF), 349-385 (DHRI…RMNK), 468-504 (DYSV…NVDP), and 505-540 (DLIT…GIKL).

The protein belongs to the PPR family. P subfamily.

This Arabidopsis thaliana (Mouse-ear cress) protein is Putative pentatricopeptide repeat-containing protein At1g28020.